The following is a 160-amino-acid chain: Ureidoglycolate lyase (160 aa).

It belongs to the ureidoglycolate lyase family. As to quaternary structure, homodimer. It depends on Ni(2+) as a cofactor.

The catalysed reaction is (S)-ureidoglycolate = urea + glyoxylate. The protein operates within nitrogen metabolism; (S)-allantoin degradation. Its function is as follows. Catalyzes the catabolism of the allantoin degradation intermediate (S)-ureidoglycolate, generating urea and glyoxylate. Involved in the anaerobic utilization of allantoin as sole nitrogen source. Reinforces the induction of genes involved in the degradation of allantoin and glyoxylate by producing glyoxylate. The sequence is that of Ureidoglycolate lyase from Escherichia coli O127:H6 (strain E2348/69 / EPEC).